The sequence spans 159 residues: Serine-protein kinase RsbW (159 aa).

This sequence belongs to the anti-sigma-factor family.

It catalyses the reaction L-seryl-[protein] + ATP = O-phospho-L-seryl-[protein] + ADP + H(+). The enzyme catalyses L-threonyl-[protein] + ATP = O-phospho-L-threonyl-[protein] + ADP + H(+). In terms of biological role, negative regulator of sigma-B activity. Phosphorylates and inactivates its specific antagonist protein, RsbV. Upon phosphorylation of RsbV, RsbW is released and binds to sigma-B, thereby blocking its ability to form an RNA polymerase holoenzyme (E-sigma-B). This chain is Serine-protein kinase RsbW, found in Staphylococcus aureus (strain Newman).